Reading from the N-terminus, the 320-residue chain is Prophage side tail fiber protein homolog StfQ (320 aa).

Disordered regions lie at residues 147-213 (SGRA…HKSS) and 241-270 (TTSGSGQTRNAGKTSSDGAHTHSLSGTAAS). 2 stretches are compositionally biased toward polar residues: residues 172–206 (DLGTETTSSFDYGTKSTNNTGAHTHSISGTANSAG) and 241–258 (TTSGSGQTRNAGKTSSDG). Low complexity predominate over residues 261–270 (THSLSGTAAS).

It belongs to the tail fiber family.

This is Prophage side tail fiber protein homolog StfQ (stfQ) from Escherichia coli (strain K12).